The primary structure comprises 102 residues: Peptide chaperone MftB (102 aa).

The protein belongs to the peptide chaperone MftB family.

Functionally, peptide chaperone involved in the biosynthesis of the enzyme cofactor mycofactocin (MFT). Binds MftA and MftC with high affinity, and is essential for MftC activity on MftA, likely via the formation of a ternary complex. Is required for the in vivo ethanol assimilation in M.smegmatis. In Mycolicibacterium smegmatis (strain ATCC 700084 / mc(2)155) (Mycobacterium smegmatis), this protein is Peptide chaperone MftB.